The sequence spans 822 residues: Phenylalanine--tRNA ligase beta subunit (822 aa).

One can recognise a tRNA-binding domain in the interval 39-150 (ADRLVGFRTA…ETAPIGESYA (112 aa)). One can recognise a B5 domain in the interval 399-502 (DWKRTARLRF…RLYGLDNVPA (104 aa)). Mg(2+) contacts are provided by aspartate 486, glutamate 489, and glutamate 490. The region spanning 728 to 821 (SPLQPVRRDF…VLKATGAVLR (94 aa)) is the FDX-ACB domain.

This sequence belongs to the phenylalanyl-tRNA synthetase beta subunit family. Type 1 subfamily. In terms of assembly, tetramer of two alpha and two beta subunits. Requires Mg(2+) as cofactor.

Its subcellular location is the cytoplasm. The catalysed reaction is tRNA(Phe) + L-phenylalanine + ATP = L-phenylalanyl-tRNA(Phe) + AMP + diphosphate + H(+). The sequence is that of Phenylalanine--tRNA ligase beta subunit from Gluconobacter oxydans (strain 621H) (Gluconobacter suboxydans).